Consider the following 114-residue polypeptide: Nucleoid-associated protein Cyan7425_0899 (114 aa).

The protein belongs to the YbaB/EbfC family. Homodimer.

It is found in the cytoplasm. The protein resides in the nucleoid. Its function is as follows. Binds to DNA and alters its conformation. May be involved in regulation of gene expression, nucleoid organization and DNA protection. This Cyanothece sp. (strain PCC 7425 / ATCC 29141) protein is Nucleoid-associated protein Cyan7425_0899.